Here is a 957-residue protein sequence, read N- to C-terminus: Melanoma-associated antigen E1 (957 aa).

A disordered region spans residues methionine 1–glycine 455. 2 stretches are compositionally biased toward polar residues: residues serine 85 to isoleucine 96 and valine 104 to leucine 130. Low complexity predominate over residues threonine 138 to threonine 162. Composition is skewed to polar residues over residues glycine 219–leucine 244, proline 268–valine 320, serine 329–valine 344, leucine 364–valine 380, and threonine 414–lysine 428. 2 consecutive MAGE domains span residues methionine 491–alanine 690 and leucine 745–alanine 936. The interval serine 743–arginine 957 is interaction with DTNA.

In terms of assembly, interacts with DTNA. Interacts with TRIM28.

The protein localises to the cytoplasm. It is found in the perinuclear region. Its subcellular location is the nucleus. The protein resides in the cell membrane. Functionally, may enhance ubiquitin ligase activity of RING-type zinc finger-containing E3 ubiquitin-protein ligases. Proposed to act through recruitment and/or stabilization of the Ubl-conjugating enzyme (E2) at the E3:substrate complex. This is Melanoma-associated antigen E1 (MAGEE1) from Homo sapiens (Human).